A 74-amino-acid polypeptide reads, in one-letter code: Mucroporin (74 aa).

The signal sequence occupies residues 1-22; it reads MKVKFLLAVFLIVLVVTDHCHA. Lysine 39 is modified (lysine amide). The propeptide occupies 45–74; sequence QMEARFEPQNRNYRKRELDLEKLFANMPDY.

Belongs to the non-disulfide-bridged peptide (NDBP) superfamily. Short antimicrobial peptide (group 4) family. Expressed by the venom gland.

Its subcellular location is the secreted. The protein resides in the target cell membrane. Functionally, mucroporin: cationic host defense peptide that have antibacterial activity by breaking membranes. Is more effective on Gram-positive than on Gram-negative bacteria. Minimum inhibitory concentrations (MIC) are the following: MIC=&gt;100 ug/ml against E.coli AB94012, MIC=&gt;100 ug/ml against P.aeruginosa AB93066, MIC=25 ug/ml against B.thuringiensis AB92037, MIC=50 ug/ml against B.subtilis AB91021, MIC=25 ug/ml against S.aureus AB94004, and MIC=25 ug/ml against the methicillin-resistant coagulase-negative Staphylococcus. Its synthetic analog mucroporin-M1 is more effective. Does not show antiviral activity against any of measles, SARS-CoV, influenza H5N1, hepatitis B and HIV-1 viruses. Mutant mucroporin-M1: can inhibit Gram-positive bacteria at low concentrations and antibiotic-resistant pathogens. Minimum inhibitory concentrations (MIC) are the following: MIC=12.5 ug/ml against E.coli AB94012, MIC=100 ug/ml against P.aeruginosa AB93066, MIC=25 ug/ml against B.thuringiensis AB92037, MIC=25 ug/ml against B.subtilis AB91021, MIC=5 ug/ml against S.aureus AB94004, and MIC=5 ug/ml against the methicillin-resistant coagulase-negative Staphylococcus. Also shows antiviral activities against measles (EC(50) of 7.15 ug/ml), SARS-CoV (EC(50) of 14.46 ug/ml), influenza H5N1 viruses (EC(50) of 2.10 mug/ml), HIV-1, and hepatitis B virus. The chain is Mucroporin from Lychas mucronatus (Chinese swimming scorpion).